A 369-amino-acid polypeptide reads, in one-letter code: 3,4-dihydroxy-2-butanone 4-phosphate synthase (369 aa).

The interval 1 to 201 is DHBP synthase; sequence MAFDRIEDII…IADLIHYRLS (201 aa). D-ribulose 5-phosphate is bound by residues 27-28, Asp32, 140-144, and Glu164; these read RE and RAGHT. Glu28 is a binding site for Mg(2+). Residue His143 coordinates Mg(2+). Positions 202–369 are GTP cyclohydrolase II-like; it reads TEHTIVRIGE…EVIESIPFPG (168 aa).

It in the N-terminal section; belongs to the DHBP synthase family. This sequence in the C-terminal section; belongs to the GTP cyclohydrolase II family. It depends on Mg(2+) as a cofactor. Mn(2+) is required as a cofactor.

It carries out the reaction D-ribulose 5-phosphate = (2S)-2-hydroxy-3-oxobutyl phosphate + formate + H(+). It participates in cofactor biosynthesis; riboflavin biosynthesis; 2-hydroxy-3-oxobutyl phosphate from D-ribulose 5-phosphate: step 1/1. Catalyzes the conversion of D-ribulose 5-phosphate to formate and 3,4-dihydroxy-2-butanone 4-phosphate. This Pseudomonas syringae pv. tomato (strain ATCC BAA-871 / DC3000) protein is 3,4-dihydroxy-2-butanone 4-phosphate synthase (ribB).